The following is a 405-amino-acid chain: Argininosuccinate synthase (405 aa).

Residues 13–21 (AYSGGLDTS) and alanine 40 contribute to the ATP site. L-citrulline-binding residues include tyrosine 91 and serine 96. ATP is bound at residue glycine 121. L-aspartate contacts are provided by threonine 123, asparagine 127, and aspartate 128. Residue asparagine 127 coordinates L-citrulline. L-citrulline contacts are provided by arginine 131, serine 182, serine 191, glutamate 267, and tyrosine 279.

Belongs to the argininosuccinate synthase family. Type 1 subfamily. Homotetramer.

It localises to the cytoplasm. It catalyses the reaction L-citrulline + L-aspartate + ATP = 2-(N(omega)-L-arginino)succinate + AMP + diphosphate + H(+). It functions in the pathway amino-acid biosynthesis; L-arginine biosynthesis; L-arginine from L-ornithine and carbamoyl phosphate: step 2/3. This chain is Argininosuccinate synthase, found in Rhizobium meliloti (strain 1021) (Ensifer meliloti).